The following is a 434-amino-acid chain: D-amino acid dehydrogenase (434 aa).

FAD is bound at residue 3–17 (VLVLGSGVIGTASAY).

It belongs to the DadA oxidoreductase family. Requires FAD as cofactor.

The catalysed reaction is a D-alpha-amino acid + A + H2O = a 2-oxocarboxylate + AH2 + NH4(+). The protein operates within amino-acid degradation; D-alanine degradation; NH(3) and pyruvate from D-alanine: step 1/1. Functionally, oxidative deamination of D-amino acids. This Pseudomonas putida (strain ATCC 700007 / DSM 6899 / JCM 31910 / BCRC 17059 / LMG 24140 / F1) protein is D-amino acid dehydrogenase.